An 854-amino-acid polypeptide reads, in one-letter code: Transcription factor asR3 (854 aa).

Positions 19 to 45 (CWECRRRKIKCDRNDPCAHCIRHETQC) form a DNA-binding region, zn(2)-C6 fungal-type. The segment at 56–156 (TDSDVSRTRP…SLSTNTSPSA (101 aa)) is disordered. 2 stretches are compositionally biased toward polar residues: residues 78–90 (ASGS…TRPS) and 125–145 (LNPS…SSRG). Residues 146 to 156 (PSLSTNTSPSA) show a composition bias toward low complexity.

The protein localises to the nucleus. Transcription factor; part of the gene cluster that mediates the biosynthesis of xenovulene A, an unusual meroterpenoid that has potent inhibitory effects on the human gamma-aminobutyrate A (GABAA) benzodiazepine receptor. The sequence is that of Transcription factor asR3 from Sarocladium schorii (Acremonium strictum (strain IMI 501407)).